Consider the following 584-residue polypeptide: 2-succinyl-5-enolpyruvyl-6-hydroxy-3-cyclohexene-1-carboxylate synthase (584 aa).

This sequence belongs to the TPP enzyme family. MenD subfamily. Homodimer. Mg(2+) is required as a cofactor. Requires Mn(2+) as cofactor. It depends on thiamine diphosphate as a cofactor.

The catalysed reaction is isochorismate + 2-oxoglutarate + H(+) = 5-enolpyruvoyl-6-hydroxy-2-succinyl-cyclohex-3-ene-1-carboxylate + CO2. The protein operates within quinol/quinone metabolism; 1,4-dihydroxy-2-naphthoate biosynthesis; 1,4-dihydroxy-2-naphthoate from chorismate: step 2/7. Its pathway is quinol/quinone metabolism; menaquinone biosynthesis. In terms of biological role, catalyzes the thiamine diphosphate-dependent decarboxylation of 2-oxoglutarate and the subsequent addition of the resulting succinic semialdehyde-thiamine pyrophosphate anion to isochorismate to yield 2-succinyl-5-enolpyruvyl-6-hydroxy-3-cyclohexene-1-carboxylate (SEPHCHC). The polypeptide is 2-succinyl-5-enolpyruvyl-6-hydroxy-3-cyclohexene-1-carboxylate synthase (Bacillus cereus (strain ATCC 10987 / NRS 248)).